The following is a 379-amino-acid chain: DNA replication and repair protein RecF (379 aa).

Residue 30–37 (GDNAQGKS) coordinates ATP.

It belongs to the RecF family.

It is found in the cytoplasm. In terms of biological role, the RecF protein is involved in DNA metabolism; it is required for DNA replication and normal SOS inducibility. RecF binds preferentially to single-stranded, linear DNA. It also seems to bind ATP. The polypeptide is DNA replication and repair protein RecF (Thermosynechococcus vestitus (strain NIES-2133 / IAM M-273 / BP-1)).